Consider the following 243-residue polypeptide: 1-(5-phosphoribosyl)-5-[(5-phosphoribosylamino)methylideneamino] imidazole-4-carboxamide isomerase (243 aa).

Aspartate 8 (proton acceptor) is an active-site residue. The active-site Proton donor is aspartate 130.

Belongs to the HisA/HisF family.

The protein resides in the cytoplasm. The catalysed reaction is 1-(5-phospho-beta-D-ribosyl)-5-[(5-phospho-beta-D-ribosylamino)methylideneamino]imidazole-4-carboxamide = 5-[(5-phospho-1-deoxy-D-ribulos-1-ylimino)methylamino]-1-(5-phospho-beta-D-ribosyl)imidazole-4-carboxamide. It participates in amino-acid biosynthesis; L-histidine biosynthesis; L-histidine from 5-phospho-alpha-D-ribose 1-diphosphate: step 4/9. The sequence is that of 1-(5-phosphoribosyl)-5-[(5-phosphoribosylamino)methylideneamino] imidazole-4-carboxamide isomerase from Acinetobacter baylyi (strain ATCC 33305 / BD413 / ADP1).